The following is a 317-amino-acid chain: GTPase Era (317 aa).

One can recognise an Era-type G domain in the interval 17–190 (RAGFACFVGR…ADLLTPLLPE (174 aa)). Residues 25 to 32 (GRPNAGKS) are G1. 25-32 (GRPNAGKS) is a binding site for GTP. Residues 51–55 (QTTRH) form a G2 region. The G3 stretch occupies residues 72 to 75 (DTPG). GTP-binding positions include 72–76 (DTPGL) and 135–138 (TKTD). Residues 135–138 (TKTD) form a G4 region. Residues 169-171 (VSA) are G5. The KH type-2 domain occupies 221–303 (VRDELPHSIA…FLDLHVKVAK (83 aa)).

It belongs to the TRAFAC class TrmE-Era-EngA-EngB-Septin-like GTPase superfamily. Era GTPase family. In terms of assembly, monomer.

It localises to the cytoplasm. It is found in the cell membrane. Functionally, an essential GTPase that binds both GDP and GTP, with rapid nucleotide exchange. Plays a role in 16S rRNA processing and 30S ribosomal subunit biogenesis and possibly also in cell cycle regulation and energy metabolism. The protein is GTPase Era of Streptomyces coelicolor (strain ATCC BAA-471 / A3(2) / M145).